We begin with the raw amino-acid sequence, 692 residues long: Elongation factor G (692 aa).

A tr-type G domain is found at 8-282 (ERTRNIGIMA…AIVDYLPAPT (275 aa)). Residues 17–24 (AHIDAGKT), 81–85 (DTPGH), and 135–138 (NKMD) each bind GTP.

It belongs to the TRAFAC class translation factor GTPase superfamily. Classic translation factor GTPase family. EF-G/EF-2 subfamily.

The protein resides in the cytoplasm. Functionally, catalyzes the GTP-dependent ribosomal translocation step during translation elongation. During this step, the ribosome changes from the pre-translocational (PRE) to the post-translocational (POST) state as the newly formed A-site-bound peptidyl-tRNA and P-site-bound deacylated tRNA move to the P and E sites, respectively. Catalyzes the coordinated movement of the two tRNA molecules, the mRNA and conformational changes in the ribosome. This chain is Elongation factor G, found in Desulforamulus reducens (strain ATCC BAA-1160 / DSM 100696 / MI-1) (Desulfotomaculum reducens).